The following is a 539-amino-acid chain: Cell division control protein 6 homolog (539 aa).

Positions 1–40 are disordered; it reads MPAIAGPSSSPQKHVVGSRSESIGGVRSAEVNTSRKRKLI. The short motif at 35–38 is the Nuclear localization signal element; sequence RKRK.

Belongs to the CDC6/cdc18 family. As to expression, highly expressed in roots, flower buds and etiolated seedlings. Expressed in leaves and stems. Highly expressed in proliferating cells such as root meristems, leaf primordia and young growing leaves, as well as cells undergoing endoreduplication cycles.

The protein localises to the nucleus. Its function is as follows. May be involved in the initiation of DNA replication. May play a role in endoreduplication. Could act as one of the factors that contributes to maintain endoreduplication competence. This Arabidopsis thaliana (Mouse-ear cress) protein is Cell division control protein 6 homolog.